A 445-amino-acid polypeptide reads, in one-letter code: MRTDQVMLSNKNTNTCCVVSSSSSDPFLSSSENGVTTTNTSTQKRKRRPAGTPDPDAEVVSLSPRTLLESDRYICEICNQGFQRDQNLQMHRRRHKVPWKLLKRDNNIEVKKRVYVCPEPTCLHHNPCHALGDLVGIKKHFRRKHSNHKQWVCERCSKGYAVQSDYKAHLKTCGTRGHSCDCGRVFSRVESFIEHQDNCSARRVHREPPRPPQTAVTVPACSSRTASTVSTPSSETNYGGTVAVTTPQPLEGRPIHQRISSSILTNSSNNLNLELQLLPLSSNQNPNQENQQQKVKEPSHHHNHNHDTTNLNLSIAPSSSYQHYNNFDRIKEIMASEQIMKIAMKEKAYAEEAKREAKRQREIAENEFANAKKIRQKAQAELERAKFLKEQSMKKISSTIMQVTCQTCKGQFQAVAVPAATADETSLVVSYMSSANTDGELENGF.

Positions 22-31 are enriched in low complexity; that stretch reads SSSDPFLSSS. The disordered stretch occupies residues 22 to 59; it reads SSSDPFLSSSENGVTTTNTSTQKRKRRPAGTPDPDAEV. Residues 32 to 42 are compositionally biased toward polar residues; the sequence is ENGVTTTNTST. 3 C2H2-type zinc fingers span residues 73 to 95, 115 to 145, and 151 to 178; these read YICE…RRRH, YVCP…RRKH, and WVCE…TRGH. Residues Cys-153, Cys-156, His-169, Cys-173, Cys-180, Cys-182, His-195, and Cys-199 each coordinate Zn(2+). The CCHC-type 2; atypical zinc-finger motif lies at 178-201; that stretch reads HSCDCGRVFSRVESFIEHQDNCSA. Positions 188–200 are SHR-binding; the sequence is RVESFIEHQDNCS. Disordered regions lie at residues 203 to 253 and 281 to 314; these read RVHR…LEGR and SSNQ…LNLS. Positions 214–248 are enriched in polar residues; the sequence is TAVTVPACSSRTASTVSTPSSETNYGGTVAVTTPQ. Residues 281 to 293 show a composition bias toward low complexity; the sequence is SSNQNPNQENQQQ. Residues 340–397 are a coiled coil; that stretch reads MKIAMKEKAYAEEAKREAKRQREIAENEFANAKKIRQKAQAELERAKFLKEQSMKKIS.

In terms of tissue distribution, mainly expressed in the endodermis, the gravity-sensing tissue in inflorescence stems. Mostly present in stems and flowers, and, to a lower extent, in seedlings, hypocotyls, roots and the shoot apical meristem (SAM).

Its subcellular location is the nucleus. Its function is as follows. Transcription factor involved in inflorescence stems gravitropism, probably by regulating starch accumulation in amyloplasts of graviperceptive cells. Required for stem circumnutation movements. Regulates lateral organ morphogenesis and gravitropic responses. Acts cooperatively with IDD16 to control silique and branche orientation. Involved in the establishment of auxin gradients through the regulation of auxin biosynthesis and transport. The protein is Zinc finger protein SHOOT GRAVITROPISM 5 of Arabidopsis thaliana (Mouse-ear cress).